The chain runs to 477 residues: Glycogen synthase (477 aa).

Lys15 contacts ADP-alpha-D-glucose.

Belongs to the glycosyltransferase 1 family. Bacterial/plant glycogen synthase subfamily.

The catalysed reaction is [(1-&gt;4)-alpha-D-glucosyl](n) + ADP-alpha-D-glucose = [(1-&gt;4)-alpha-D-glucosyl](n+1) + ADP + H(+). The protein operates within glycan biosynthesis; glycogen biosynthesis. Functionally, synthesizes alpha-1,4-glucan chains using ADP-glucose. This Shigella flexneri protein is Glycogen synthase.